The primary structure comprises 581 residues: Arginine--tRNA ligase (581 aa).

The short motif at 126–136 is the 'HIGH' region element; sequence PNLAKEMHVGH.

This sequence belongs to the class-I aminoacyl-tRNA synthetase family. Monomer.

The protein resides in the cytoplasm. The enzyme catalyses tRNA(Arg) + L-arginine + ATP = L-arginyl-tRNA(Arg) + AMP + diphosphate. This chain is Arginine--tRNA ligase, found in Shewanella baltica (strain OS155 / ATCC BAA-1091).